A 1043-amino-acid chain; its full sequence is Ack-related non-receptor tyrosine kinase (1043 aa).

Residues 113 to 379 (ITLCKELGQG…SDIVAKFPER (267 aa)) enclose the Protein kinase domain. ATP is bound by residues 119–127 (LGQGEFGSV) and lysine 146. Aspartate 241 (proton acceptor) is an active-site residue. One can recognise an SH3 domain in the interval 379–444 (RRAQSVRAVV…RPTDTVAHLG (66 aa)). The tract at residues 443 to 481 (LGSEPPCSNGTIENGFSEKEKGGKKNKKAEKESERERKK) is disordered. Residues 458–481 (FSEKEKGGKKNKKAEKESERERKK) show a composition bias toward basic and acidic residues. One can recognise a CRIB domain in the interval 484-498 (ISEPVGDVRHTCHVG). 4 disordered regions span residues 514–644 (MCPT…SAAN), 790–842 (KINE…GWSS), 859–898 (KQAS…LSVR), and 932–993 (LIDG…RQFP). Positions 516–543 (PTSSSPSTSRGSQASPAPSHTSSSTTSS) are enriched in low complexity. The segment covering 610–624 (GNQHSVQVHDQFSSL) has biased composition (polar residues). Residues 630–644 (SLTPTAPPLTASAAN) are compositionally biased toward low complexity. Positions 785-812 (EQEVRKINEKSAREHRKTEDLLREERQK) form a coiled coil. The span at 790–818 (KINEKSAREHRKTEDLLREERQKEQKPGE) shows a compositional bias: basic and acidic residues. Residues 825 to 842 (PAESLYSTRTPQQEGWSS) show a composition bias toward polar residues. Low complexity predominate over residues 870-884 (PTSSRLSTLDRSSIS).

The protein belongs to the protein kinase superfamily. Tyr protein kinase family. Mg(2+) serves as cofactor.

The enzyme catalyses L-tyrosyl-[protein] + ATP = O-phospho-L-tyrosyl-[protein] + ADP + H(+). It catalyses the reaction L-seryl-[protein] + ATP = O-phospho-L-seryl-[protein] + ADP + H(+). It carries out the reaction L-threonyl-[protein] + ATP = O-phospho-L-threonyl-[protein] + ADP + H(+). In terms of biological role, probable tyrosine protein kinase which plays a role in vulva development, probably by acting as a negative regulator of the let-23/EGFR and let-60/ras pathway. Involved in the negative regulation of germline development. In Caenorhabditis elegans, this protein is Ack-related non-receptor tyrosine kinase.